The sequence spans 473 residues: Calcium uptake protein 1, mitochondrial (473 aa).

The transit peptide at 1–33 (MFRLRFIPAVAGLAAVSRRYHGVANHARSRRRL) directs the protein to the mitochondrion. Positions 61–101 (SSVKHSMREETSEKEKEDADQAVESSDEDQPQEGKKKKARV) are disordered. The span at 66–79 (SMREETSEKEKEDA) shows a compositional bias: basic and acidic residues. The segment covering 80 to 91 (DQAVESSDEDQP) has biased composition (acidic residues). Positions 96–107 (KKKARVGFRDRK) are polybasic region. A k/R-ring region spans residues 123 to 126 (KIFR). The EF-hand 1 domain occupies 215-250 (TPQRNFEIAFKMFDLNGDGEVDMEEFEQVQSIIRSQ). Residues aspartate 228, asparagine 230, aspartate 232, glutamate 234, and glutamate 239 each contribute to the Ca(2+) site. A k/R-ring region spans residues 256–260 (RHRDR). One can recognise an EF-hand 2 domain in the interval 405-440 (LSDHVCDVVFALFDCDGNGELSNKEFIAIMKQRLMR). Aspartate 418, aspartate 420, asparagine 422, glutamate 424, and glutamate 429 together coordinate Ca(2+). The C-helix region stretch occupies residues 452-462 (RLMRAMWKCAQ).

The protein belongs to the MICU1 family. MICU1 subfamily. As to quaternary structure, heterodimer; disulfide-linked; heterodimerizes with micu2. Component of the uniplex complex.

It localises to the mitochondrion intermembrane space. Its subcellular location is the mitochondrion inner membrane. Its function is as follows. Calcium sensor of the mitochondrial calcium uniporter (mcu) channel, which senses calcium level via its EF-hand domains. micu1 and micu2 form a disulfide-linked heterodimer that stimulates and inhibits MCU activity, depending on the concentration of calcium. At low calcium levels, micu1 occludes the pore of the MCU channel, preventing mitochondrial calcium uptake. At higher calcium levels, calcium-binding to micu1 and micu2 induces a conformational change that weakens mcu-micu1 interactions and moves the micu1-micu2 heterodimer away from the pore, allowing calcium permeation through the mcu channel. Also required to protect against manganese toxicity by preventing manganese uptake by mcu. The sequence is that of Calcium uptake protein 1, mitochondrial (micu1) from Xenopus tropicalis (Western clawed frog).